Consider the following 140-residue polypeptide: Lipoprotein MlpD (140 aa).

The N-terminal stretch at 1–17 (MKIINILFCLFLLMLNG) is a signal peptide. Residue Cys18 is the site of N-palmitoyl cysteine attachment. Cys18 carries the S-diacylglycerol cysteine lipid modification. The tract at residues 22–53 (DTNNSQTKSRQKRDLTQKEATQEKPKSKEELL) is disordered. The span at 33–53 (KRDLTQKEATQEKPKSKEELL) shows a compositional bias: basic and acidic residues.

Belongs to the Multicopy lipoprotein (Mlp) family.

Its subcellular location is the cell outer membrane. An outer membrane protein that may participate in pathogenesis. Some human Lyme disease patients have antibodies against this protein. The Mlp proteins probably undergo intragenic recombination, generating new alleles. This Borreliella burgdorferi (strain ATCC 35210 / DSM 4680 / CIP 102532 / B31) (Borrelia burgdorferi) protein is Lipoprotein MlpD.